Consider the following 323-residue polypeptide: Fructose-1,6-bisphosphatase class 1 (323 aa).

Mg(2+) contacts are provided by Glu-93, Asp-114, Leu-116, and Asp-117. Substrate is bound by residues 117–120, Asn-205, Tyr-233, and Lys-263; that span reads DGSS. Residue Glu-269 participates in Mg(2+) binding.

It belongs to the FBPase class 1 family. As to quaternary structure, homotetramer. Requires Mg(2+) as cofactor.

The protein resides in the cytoplasm. The catalysed reaction is beta-D-fructose 1,6-bisphosphate + H2O = beta-D-fructose 6-phosphate + phosphate. The protein operates within carbohydrate biosynthesis; gluconeogenesis. This chain is Fructose-1,6-bisphosphatase class 1, found in Sulfurihydrogenibium sp. (strain YO3AOP1).